The following is a 134-amino-acid chain: Cytochrome b (134 aa).

Helical transmembrane passes span 33–53 (FGSL…FLAM), 77–98 (WLLR…YLHV), and 113–133 (WNIG…GYVL). Positions 83 and 97 each coordinate heme b.

This sequence belongs to the cytochrome b family. The cytochrome bc1 complex contains 11 subunits: 3 respiratory subunits (MT-CYB, CYC1 and UQCRFS1), 2 core proteins (UQCRC1 and UQCRC2) and 6 low-molecular weight proteins (UQCRH/QCR6, UQCRB/QCR7, UQCRQ/QCR8, UQCR10/QCR9, UQCR11/QCR10 and a cleavage product of UQCRFS1). This cytochrome bc1 complex then forms a dimer. Requires heme b as cofactor.

Its subcellular location is the mitochondrion inner membrane. In terms of biological role, component of the ubiquinol-cytochrome c reductase complex (complex III or cytochrome b-c1 complex) that is part of the mitochondrial respiratory chain. The b-c1 complex mediates electron transfer from ubiquinol to cytochrome c. Contributes to the generation of a proton gradient across the mitochondrial membrane that is then used for ATP synthesis. In Sturnira tildae (Tilda's yellow-shouldered bat), this protein is Cytochrome b (MT-CYB).